The primary structure comprises 262 residues: Phosphatidylglycerol--prolipoprotein diacylglyceryl transferase 1 (262 aa).

The next 4 helical transmembrane spans lie at 15–35, 40–60, 83–103, and 108–128; these read WYGI…SINA, LNFD…IIGA, QGGL…FIYC, and VDFL…QGIG. Arginine 129 contributes to the a 1,2-diacyl-sn-glycero-3-phospho-(1'-sn-glycerol) binding site. 3 helical membrane passes run 169–189, 197–217, and 229–249; these read TFLY…IILY, GVVI…IEGL, and VAQL…IIIV.

It belongs to the Lgt family.

Its subcellular location is the cell membrane. It carries out the reaction L-cysteinyl-[prolipoprotein] + a 1,2-diacyl-sn-glycero-3-phospho-(1'-sn-glycerol) = an S-1,2-diacyl-sn-glyceryl-L-cysteinyl-[prolipoprotein] + sn-glycerol 1-phosphate + H(+). Its pathway is protein modification; lipoprotein biosynthesis (diacylglyceryl transfer). Functionally, catalyzes the transfer of the diacylglyceryl group from phosphatidylglycerol to the sulfhydryl group of the N-terminal cysteine of a prolipoprotein, the first step in the formation of mature lipoproteins. The protein is Phosphatidylglycerol--prolipoprotein diacylglyceryl transferase 1 of Clostridium perfringens (strain 13 / Type A).